Consider the following 255-residue polypeptide: MNSERSDVTLYQPFLDYAIAYMRSRLDLEPYPIPTGFESNSAVVGKGKNQEEVVTTSYAFQTAKLRQIRAAHVQGGNSLQVLNFVIFPHLNYDLPFFGADLVTLPGGHLIALDMQPLFRDDSAYQAKYTEPILPIFHAHQQHLSWGGDFPEEAQPFFSPAFLWTRPQETAVVETQVFAAFKDYLKAYLDFVEQAEAVTDSQNLVAIKQAQLRYLRYRAEKDPARGMFKRFYGAEWTEEYIHGFLFDLERKLTVVK.

This sequence belongs to the HY2 family.

It carries out the reaction (3Z)-phycoerythrobilin + oxidized 2[4Fe-4S]-[ferredoxin] = 15,16-dihydrobiliverdin + reduced 2[4Fe-4S]-[ferredoxin] + 2 H(+). In terms of biological role, catalyzes the two-electron reduction of the C2 and C3(1) diene system of 15,16-dihydrobiliverdin. The protein is Phycoerythrobilin:ferredoxin oxidoreductase (pebB) of Nostoc punctiforme (strain ATCC 29133 / PCC 73102).